Reading from the N-terminus, the 949-residue chain is Valine--tRNA ligase (949 aa).

The 'HIGH' region motif lies at 40 to 50; sequence PNVTGSLHMGH. Positions 553 to 557 match the 'KMSKS' region motif; it reads KMSKS. Lysine 556 contacts ATP. Positions 877 to 949 form a coiled coil; it reads MAGLIDKEAE…QEQQDKIKAL (73 aa).

This sequence belongs to the class-I aminoacyl-tRNA synthetase family. ValS type 1 subfamily. In terms of assembly, monomer.

It is found in the cytoplasm. It catalyses the reaction tRNA(Val) + L-valine + ATP = L-valyl-tRNA(Val) + AMP + diphosphate. Functionally, catalyzes the attachment of valine to tRNA(Val). As ValRS can inadvertently accommodate and process structurally similar amino acids such as threonine, to avoid such errors, it has a 'posttransfer' editing activity that hydrolyzes mischarged Thr-tRNA(Val) in a tRNA-dependent manner. In Idiomarina loihiensis (strain ATCC BAA-735 / DSM 15497 / L2-TR), this protein is Valine--tRNA ligase.